The following is a 462-amino-acid chain: ATP synthase subunit beta 1 (462 aa).

Position 151 to 158 (151 to 158 (GGAGVGKT)) interacts with ATP.

It belongs to the ATPase alpha/beta chains family. In terms of assembly, F-type ATPases have 2 components, CF(1) - the catalytic core - and CF(0) - the membrane proton channel. CF(1) has five subunits: alpha(3), beta(3), gamma(1), delta(1), epsilon(1). CF(0) has four main subunits: a(1), b(1), b'(1) and c(9-12).

It localises to the cell inner membrane. It catalyses the reaction ATP + H2O + 4 H(+)(in) = ADP + phosphate + 5 H(+)(out). Functionally, produces ATP from ADP in the presence of a proton gradient across the membrane. The catalytic sites are hosted primarily by the beta subunits. The chain is ATP synthase subunit beta 1 from Chlorobium luteolum (strain DSM 273 / BCRC 81028 / 2530) (Pelodictyon luteolum).